Consider the following 458-residue polypeptide: ATP-dependent protease ATPase subunit HslU (458 aa).

Residues Val-18, 60–65, Asp-270, Glu-335, and Arg-407 contribute to the ATP site; that span reads GVGKTE.

It belongs to the ClpX chaperone family. HslU subfamily. In terms of assembly, a double ring-shaped homohexamer of HslV is capped on each side by a ring-shaped HslU homohexamer. The assembly of the HslU/HslV complex is dependent on binding of ATP.

The protein resides in the cytoplasm. In terms of biological role, ATPase subunit of a proteasome-like degradation complex; this subunit has chaperone activity. The binding of ATP and its subsequent hydrolysis by HslU are essential for unfolding of protein substrates subsequently hydrolyzed by HslV. HslU recognizes the N-terminal part of its protein substrates and unfolds these before they are guided to HslV for hydrolysis. This chain is ATP-dependent protease ATPase subunit HslU, found in Desulfitobacterium hafniense (strain DSM 10664 / DCB-2).